The chain runs to 225 residues: 3-dehydroquinate dehydratase (225 aa).

3-dehydroquinate is bound by residues Ser6, 30–32 (EWR), and Arg62. The active-site Proton donor/acceptor is His118. Lys143 serves as the catalytic Schiff-base intermediate with substrate. 3 residues coordinate 3-dehydroquinate: Arg186, Ser205, and Gln209.

The protein belongs to the type-I 3-dehydroquinase family. Homodimer.

The catalysed reaction is 3-dehydroquinate = 3-dehydroshikimate + H2O. Its pathway is metabolic intermediate biosynthesis; chorismate biosynthesis; chorismate from D-erythrose 4-phosphate and phosphoenolpyruvate: step 3/7. Its function is as follows. Involved in the third step of the chorismate pathway, which leads to the biosynthesis of aromatic amino acids. Catalyzes the cis-dehydration of 3-dehydroquinate (DHQ) and introduces the first double bond of the aromatic ring to yield 3-dehydroshikimate. This is 3-dehydroquinate dehydratase from Streptococcus pneumoniae (strain Taiwan19F-14).